The sequence spans 266 residues: Type III pantothenate kinase (266 aa).

Position 11–18 (11–18) interacts with ATP; sequence DIGNTSTV. 111–114 serves as a coordination point for substrate; that stretch reads GADR. The active-site Proton acceptor is Asp-113. Asp-135 is a K(+) binding site. Thr-138 provides a ligand contact to ATP. Thr-190 lines the substrate pocket.

This sequence belongs to the type III pantothenate kinase family. Homodimer. NH4(+) is required as a cofactor. The cofactor is K(+).

The protein resides in the cytoplasm. It catalyses the reaction (R)-pantothenate + ATP = (R)-4'-phosphopantothenate + ADP + H(+). It participates in cofactor biosynthesis; coenzyme A biosynthesis; CoA from (R)-pantothenate: step 1/5. Functionally, catalyzes the phosphorylation of pantothenate (Pan), the first step in CoA biosynthesis. The protein is Type III pantothenate kinase of Deinococcus geothermalis (strain DSM 11300 / CIP 105573 / AG-3a).